A 331-amino-acid polypeptide reads, in one-letter code: Heat-inducible transcription repressor HrcA (331 aa).

Belongs to the HrcA family.

In terms of biological role, negative regulator of class I heat shock genes (grpE-dnaK-dnaJ and groELS operons). Prevents heat-shock induction of these operons. This chain is Heat-inducible transcription repressor HrcA, found in Synechococcus sp. (strain WH7803).